The chain runs to 114 residues: UPF0342 protein SSP0954 (114 aa).

Belongs to the UPF0342 family.

This chain is UPF0342 protein SSP0954, found in Staphylococcus saprophyticus subsp. saprophyticus (strain ATCC 15305 / DSM 20229 / NCIMB 8711 / NCTC 7292 / S-41).